The chain runs to 118 residues: Autophagy-related protein 8D (118 aa).

G118 carries Phosphatidylethanolamine amidated glycine lipidation.

Belongs to the ATG8 family. In terms of assembly, interacts with ATG4. The C-terminal Gly is amidated with phosphatidylethanolamine by an activating system similar to that for ubiquitin.

The protein localises to the cytoplasmic vesicle. Its subcellular location is the autophagosome membrane. It localises to the vacuole membrane. The protein resides in the cytoplasm. It is found in the cytoskeleton. In terms of biological role, ubiquitin-like modifier involved in autophagosomes formation. May mediate the delivery of the autophagosomes to the vacuole via the microtubule cytoskeleton. This is Autophagy-related protein 8D (ATG8D) from Oryza sativa subsp. japonica (Rice).